A 199-amino-acid polypeptide reads, in one-letter code: Probable GTP-binding protein EngB (199 aa).

An EngB-type G domain is found at 22–196; it reads NFSEVAFLGR…EDVIINQTLG (175 aa). Residues 30–37, 57–61, 82–85, 152–155, and 175–177 contribute to the GTP site; these read GRSNVGKS, GKTQL, DLPG, TKCD, and VSN. 2 residues coordinate Mg(2+): Ser-37 and Thr-59.

The protein belongs to the TRAFAC class TrmE-Era-EngA-EngB-Septin-like GTPase superfamily. EngB GTPase family. Mg(2+) serves as cofactor.

Its function is as follows. Necessary for normal cell division and for the maintenance of normal septation. The protein is Probable GTP-binding protein EngB of Campylobacter jejuni subsp. doylei (strain ATCC BAA-1458 / RM4099 / 269.97).